Consider the following 146-residue polypeptide: VHWSAEEKQLITGLWGKVNVADCGAEALARLLIVYPWTQRFFSSFGNLSSPTAIIGNPMVRAHGKKVLTSFGEAVKNLDNIKNTFAQLSELHCDKLHVDPENFRLLGDILIIVLAAHFAKEFTPDCQAAWQKLVRVVAHALARKYH.

One can recognise a Globin domain in the interval 2–146; it reads HWSAEEKQLI…VAHALARKYH (145 aa). Residues His63 and His92 each contribute to the heme b site.

Belongs to the globin family. In terms of assembly, heterotetramer of two alpha chains and two beta chains. In terms of tissue distribution, red blood cells.

Involved in oxygen transport from the lung to the various peripheral tissues. In Stercorarius maccormicki (South polar skua), this protein is Hemoglobin subunit beta (HBB).